The chain runs to 255 residues: 5-oxoprolinase subunit A 2 (255 aa).

This sequence belongs to the LamB/PxpA family. In terms of assembly, forms a complex composed of PxpA, PxpB and PxpC.

It catalyses the reaction 5-oxo-L-proline + ATP + 2 H2O = L-glutamate + ADP + phosphate + H(+). In terms of biological role, catalyzes the cleavage of 5-oxoproline to form L-glutamate coupled to the hydrolysis of ATP to ADP and inorganic phosphate. The protein is 5-oxoprolinase subunit A 2 of Agrobacterium fabrum (strain C58 / ATCC 33970) (Agrobacterium tumefaciens (strain C58)).